The primary structure comprises 486 residues: Vicilin-like seed storage protein At3g22640 (486 aa).

A signal peptide spans Met1–Cys22. The tract at residues Pro34–Thr60 is disordered. Cupin type-1 domains follow at residues Tyr64 to Gly223 and Phe278 to Glu448. N-linked (GlcNAc...) asparagine glycans are attached at residues Asn168, Asn316, and Asn455.

The protein belongs to the 7S seed storage protein family. In terms of tissue distribution, predominantly expressed in the embryo and endosperm of developing seeds. Also present in seedlings.

Functionally, seed storage protein. (Microbial infection) Involved in tobacco mosaic virus (TMV) replication. Required for endoplasmic reticulum (ER) aggregations mediated by TMV main replicase (P126) upon viral infection. The protein is Vicilin-like seed storage protein At3g22640 of Arabidopsis thaliana (Mouse-ear cress).